Reading from the N-terminus, the 459-residue chain is Bifunctional protein GlmU (459 aa).

The pyrophosphorylase stretch occupies residues 1–229 (MSNFAIXLAA…FDESLGVNDR (229 aa)). UDP-N-acetyl-alpha-D-glucosamine-binding positions include 8–11 (LAAG), K22, Q72, and 77–78 (GT). D102 contacts Mg(2+). Residues G139, E154, N169, and N227 each contribute to the UDP-N-acetyl-alpha-D-glucosamine site. N227 is a Mg(2+) binding site. The tract at residues 230-250 (VALATAESVMRRRINHKHMVN) is linker. Positions 251–459 (GVSFVNPEAT…TRLPHHPKNQ (209 aa)) are N-acetyltransferase. Residues R332 and K350 each coordinate UDP-N-acetyl-alpha-D-glucosamine. The Proton acceptor role is filled by H362. Residues Y365 and N376 each contribute to the UDP-N-acetyl-alpha-D-glucosamine site. Residues A379, 385–386 (NY), S404, A422, and R439 each bind acetyl-CoA.

In the N-terminal section; belongs to the N-acetylglucosamine-1-phosphate uridyltransferase family. The protein in the C-terminal section; belongs to the transferase hexapeptide repeat family. In terms of assembly, homotrimer. Mg(2+) is required as a cofactor.

Its subcellular location is the cytoplasm. The enzyme catalyses alpha-D-glucosamine 1-phosphate + acetyl-CoA = N-acetyl-alpha-D-glucosamine 1-phosphate + CoA + H(+). It catalyses the reaction N-acetyl-alpha-D-glucosamine 1-phosphate + UTP + H(+) = UDP-N-acetyl-alpha-D-glucosamine + diphosphate. Its pathway is nucleotide-sugar biosynthesis; UDP-N-acetyl-alpha-D-glucosamine biosynthesis; N-acetyl-alpha-D-glucosamine 1-phosphate from alpha-D-glucosamine 6-phosphate (route II): step 2/2. It participates in nucleotide-sugar biosynthesis; UDP-N-acetyl-alpha-D-glucosamine biosynthesis; UDP-N-acetyl-alpha-D-glucosamine from N-acetyl-alpha-D-glucosamine 1-phosphate: step 1/1. It functions in the pathway bacterial outer membrane biogenesis; LPS lipid A biosynthesis. In terms of biological role, catalyzes the last two sequential reactions in the de novo biosynthetic pathway for UDP-N-acetylglucosamine (UDP-GlcNAc). The C-terminal domain catalyzes the transfer of acetyl group from acetyl coenzyme A to glucosamine-1-phosphate (GlcN-1-P) to produce N-acetylglucosamine-1-phosphate (GlcNAc-1-P), which is converted into UDP-GlcNAc by the transfer of uridine 5-monophosphate (from uridine 5-triphosphate), a reaction catalyzed by the N-terminal domain. This chain is Bifunctional protein GlmU, found in Streptococcus pneumoniae serotype 19F (strain G54).